The following is a 100-amino-acid chain: Small ribosomal subunit protein uS14 (100 aa).

The protein belongs to the universal ribosomal protein uS14 family. Part of the 30S ribosomal subunit. Contacts proteins S3 and S10.

Functionally, binds 16S rRNA, required for the assembly of 30S particles and may also be responsible for determining the conformation of the 16S rRNA at the A site. This chain is Small ribosomal subunit protein uS14, found in Prochlorococcus marinus subsp. pastoris (strain CCMP1986 / NIES-2087 / MED4).